Consider the following 267-residue polypeptide: uncharacterized protein (267 aa).

Residues 37–62 adopt a coiled-coil conformation; that stretch reads DSSNNYKKKYKKYKRKYIDLKKQLNY.

This is an uncharacterized protein from Acanthamoeba polyphaga (Amoeba).